We begin with the raw amino-acid sequence, 334 residues long: MDERLVSSELDNHESAIEQSLRPQRLAQYIGQEKVKDNLKVFIEAAKMREETLDHVLLYGPPGLGKTTLAAIIANEMGVNLRTTSGPAIERPGDLAAILTALEPGDVLFIDEIHRLHRSIEEVLYPAMEDFCLDIVIGKGPSARSVRLDLPPFTLVGATTRVGLLTAPLRDRFGVLSRLEYYTRDELSEIVIRTAELFEVDIDSLSALEIARRSRGTPRIANRLLRRVRDFAQVLGNSSITEEVAVDALERLQVDKLGLDHIDRKLLMGMIEKFGGGPVGIDTISATIGEESHTIEDVYEPYLLQIGFIQRTPRGRIVTPDVYSHFKMEVPNHD.

Positions 1–182 (MDERLVSSEL…FGVLSRLEYY (182 aa)) are large ATPase domain (RuvB-L). Residues Leu21, Arg22, Gly63, Lys66, Thr67, Thr68, 129–131 (EDF), Arg172, Tyr182, and Arg219 contribute to the ATP site. Thr67 contacts Mg(2+). A small ATPAse domain (RuvB-S) region spans residues 183–253 (TRDELSEIVI…VAVDALERLQ (71 aa)). Residues 256–334 (KLGLDHIDRK…HFKMEVPNHD (79 aa)) are head domain (RuvB-H). DNA is bound by residues Arg311 and Arg316.

It belongs to the RuvB family. Homohexamer. Forms an RuvA(8)-RuvB(12)-Holliday junction (HJ) complex. HJ DNA is sandwiched between 2 RuvA tetramers; dsDNA enters through RuvA and exits via RuvB. An RuvB hexamer assembles on each DNA strand where it exits the tetramer. Each RuvB hexamer is contacted by two RuvA subunits (via domain III) on 2 adjacent RuvB subunits; this complex drives branch migration. In the full resolvosome a probable DNA-RuvA(4)-RuvB(12)-RuvC(2) complex forms which resolves the HJ.

The protein resides in the cytoplasm. The catalysed reaction is ATP + H2O = ADP + phosphate + H(+). Its function is as follows. The RuvA-RuvB-RuvC complex processes Holliday junction (HJ) DNA during genetic recombination and DNA repair, while the RuvA-RuvB complex plays an important role in the rescue of blocked DNA replication forks via replication fork reversal (RFR). RuvA specifically binds to HJ cruciform DNA, conferring on it an open structure. The RuvB hexamer acts as an ATP-dependent pump, pulling dsDNA into and through the RuvAB complex. RuvB forms 2 homohexamers on either side of HJ DNA bound by 1 or 2 RuvA tetramers; 4 subunits per hexamer contact DNA at a time. Coordinated motions by a converter formed by DNA-disengaged RuvB subunits stimulates ATP hydrolysis and nucleotide exchange. Immobilization of the converter enables RuvB to convert the ATP-contained energy into a lever motion, pulling 2 nucleotides of DNA out of the RuvA tetramer per ATP hydrolyzed, thus driving DNA branch migration. The RuvB motors rotate together with the DNA substrate, which together with the progressing nucleotide cycle form the mechanistic basis for DNA recombination by continuous HJ branch migration. Branch migration allows RuvC to scan DNA until it finds its consensus sequence, where it cleaves and resolves cruciform DNA. The polypeptide is Holliday junction branch migration complex subunit RuvB (Bacillus licheniformis (strain ATCC 14580 / DSM 13 / JCM 2505 / CCUG 7422 / NBRC 12200 / NCIMB 9375 / NCTC 10341 / NRRL NRS-1264 / Gibson 46)).